The sequence spans 188 residues: PRA1 family protein 3 (188 aa).

Methionine 1 carries the post-translational modification N-acetylmethionine. Over methionine 1–arginine 35 the chain is Cytoplasmic. The next 2 helical transmembrane spans lie at valine 36–serine 56 and valine 57–phenylalanine 77. The Cytoplasmic portion of the chain corresponds to threonine 78–methionine 93. Transmembrane regions (helical) follow at residues lysine 94 to serine 114 and leucine 115 to isoleucine 135. The segment at methionine 103 to glycine 117 is required for homodimer formation and heterodimer formation with ARL6IP1. At histidine 136 to glutamate 188 the chain is on the cytoplasmic side. The interval histidine 136–glutamate 188 is targeting to endoplasmic reticulum membrane.

It belongs to the PRA1 family. As to quaternary structure, homodimer. Heterodimer with ARL6IP1. Forms multimers. Interacts with ARL6. Interacts with prenylated RAB1A and RAB3A. Interacts with SLC1A1/EAAC1. Interacts with RTN2 (via first transmembrane domain). Does not interact with VAMP1, VAMP2 or VAMP3.

It is found in the endoplasmic reticulum membrane. The protein localises to the cell membrane. Its subcellular location is the cytoplasm. The protein resides in the cytoskeleton. In terms of biological role, regulates intracellular concentrations of taurine and glutamate. Negatively modulates SLC1A1/EAAC1 glutamate transport activity by decreasing its affinity for glutamate in a PKC activity-dependent manner. Plays a role in the retention of SLC1A1/EAAC1 in the endoplasmic reticulum. This is PRA1 family protein 3 (ARL6IP5) from Bos taurus (Bovine).